A 160-amino-acid chain; its full sequence is Probable small nuclear ribonucleoprotein-associated protein B (160 aa).

One can recognise a Sm domain in the interval 4 to 86; that stretch reads SKNNKMMAHL…IVSMTVDGPP (83 aa). A disordered region spans residues 80 to 160; the sequence is MTVDGPPPRD…YGGPPGGRPF (81 aa). Composition is skewed to gly residues over residues 99 to 113, 128 to 143, and 150 to 160; these read GGAGGVGQAKPGGRG, APGGLSGAMRGHGGPG, and GYGGPPGGRPF.

It belongs to the snRNP SmB/SmN family.

It is found in the nucleus. The protein resides in the cytoplasm. It localises to the cytosol. In terms of biological role, plays a role in pre-mRNA splicing as a core component of the spliceosomal U1, U2, U4 and U5 small nuclear ribonucleoproteins (snRNPs), the building blocks of the spliceosome. The polypeptide is Probable small nuclear ribonucleoprotein-associated protein B (snr-2) (Caenorhabditis elegans).